The primary structure comprises 369 residues: 3,4-dihydroxy-2-butanone 4-phosphate synthase (369 aa).

The segment at 1-201 (MAFDRIEDII…IADLIHYRLS (201 aa)) is DHBP synthase. Residues 27 to 28 (RE), D32, 140 to 144 (RAGHT), and E164 contribute to the D-ribulose 5-phosphate site. E28 is a binding site for Mg(2+). Residue H143 participates in Mg(2+) binding. Residues 202–369 (TEHTIVRIGE…EVIESIPFPG (168 aa)) are GTP cyclohydrolase II-like.

In the N-terminal section; belongs to the DHBP synthase family. It in the C-terminal section; belongs to the GTP cyclohydrolase II family. Mg(2+) serves as cofactor. Requires Mn(2+) as cofactor.

It catalyses the reaction D-ribulose 5-phosphate = (2S)-2-hydroxy-3-oxobutyl phosphate + formate + H(+). It participates in cofactor biosynthesis; riboflavin biosynthesis; 2-hydroxy-3-oxobutyl phosphate from D-ribulose 5-phosphate: step 1/1. Its function is as follows. Catalyzes the conversion of D-ribulose 5-phosphate to formate and 3,4-dihydroxy-2-butanone 4-phosphate. This chain is 3,4-dihydroxy-2-butanone 4-phosphate synthase (ribB), found in Pseudomonas syringae pv. tomato (strain ATCC BAA-871 / DC3000).